A 409-amino-acid polypeptide reads, in one-letter code: Inactive serine protease 35 (409 aa).

Residues 1-20 form the signal peptide; sequence MENTLLWLVILIPGWALSDG. Asparagine 90 is a glycosylation site (N-linked (GlcNAc...) asparagine). The 281-residue stretch at 124–404 folds into the Peptidase S1 domain; that stretch reads VYGTDSRFSI…ICLWIHGNAA (281 aa). The cysteines at positions 154 and 170 are disulfide-linked. Over residues 188-207 the composition is skewed to basic residues; that stretch reads VLKMRNKGGRKKRRGSKRSR. Positions 188-247 are disordered; the sequence is VLKMRNKGGRKKRRGSKRSRREAESAGQSQAHLRESTTQRPGKKSRRGPRVTQGRPSFQW.

Belongs to the peptidase S1 family. In ovary, it localizes to the theca cells of pre-antral follicles, the theca and granulosa cells of pre-ovulatory and ovulatory follicles, as well as to the developing corpus luteum.

It localises to the secreted. The sequence is that of Inactive serine protease 35 (Prss35) from Mus musculus (Mouse).